The sequence spans 340 residues: MAITVYYDKDCDLSLIRSKKVAIIGFGSQGHAHAENLRDSGVDVVVGLNPKGKSWAKAEAKGFKVMSVSEATKYADLIMILTPDEFQADIFKAEIEPNLSEGNAIAFGHGFNIHYGQIIPPKGIDCIMIAPKAPGHTVRNEFVNGGGIPDLIAVSQDATGKAKDLALSYASAIGGGRTGIIETTFKAETETDLFGEQAVLCGGLCALINAGFETLTEAGYEPEMAYFECLHEMKLIVDLIYQGGMADMRYSISNTAEYGDYVSGVRVVNESSKAAMKAILKEIQDGTFAKNFILERKAGYTKMNAERKISEASLLNKTGEKLRGMMPWINKGRLVNKDKN.

The region spanning 1–183 (MAITVYYDKD…GGGRTGIIET (183 aa)) is the KARI N-terminal Rossmann domain. NADP(+)-binding positions include 26 to 29 (FGSQ), Ser54, and 84 to 87 (DEFQ). The active site involves His109. Gly135 lines the NADP(+) pocket. Residues 184–329 (TFKAETETDL…EKLRGMMPWI (146 aa)) enclose the KARI C-terminal knotted domain. Asp192, Glu196, Glu228, and Glu232 together coordinate Mg(2+). Ser253 contacts substrate.

It belongs to the ketol-acid reductoisomerase family. Mg(2+) serves as cofactor.

The catalysed reaction is (2R)-2,3-dihydroxy-3-methylbutanoate + NADP(+) = (2S)-2-acetolactate + NADPH + H(+). The enzyme catalyses (2R,3R)-2,3-dihydroxy-3-methylpentanoate + NADP(+) = (S)-2-ethyl-2-hydroxy-3-oxobutanoate + NADPH + H(+). It functions in the pathway amino-acid biosynthesis; L-isoleucine biosynthesis; L-isoleucine from 2-oxobutanoate: step 2/4. It participates in amino-acid biosynthesis; L-valine biosynthesis; L-valine from pyruvate: step 2/4. Its function is as follows. Involved in the biosynthesis of branched-chain amino acids (BCAA). Catalyzes an alkyl-migration followed by a ketol-acid reduction of (S)-2-acetolactate (S2AL) to yield (R)-2,3-dihydroxy-isovalerate. In the isomerase reaction, S2AL is rearranged via a Mg-dependent methyl migration to produce 3-hydroxy-3-methyl-2-ketobutyrate (HMKB). In the reductase reaction, this 2-ketoacid undergoes a metal-dependent reduction by NADPH to yield (R)-2,3-dihydroxy-isovalerate. This chain is Ketol-acid reductoisomerase (NADP(+)), found in Campylobacter fetus subsp. fetus (strain 82-40).